The primary structure comprises 597 residues: Siderophore iron transporter 2 (597 aa).

At S46 the chain carries Phosphoserine. The next 14 helical transmembrane spans lie at 65 to 85, 97 to 117, 131 to 151, 159 to 179, 190 to 210, 225 to 245, 281 to 301, 312 to 332, 357 to 377, 390 to 410, 419 to 439, 448 to 468, 485 to 505, and 558 to 578; these read IIVA…EQQT, FSAH…LAVV, SESL…LAFS, VAYI…QLII, ILSA…PVLA, YGIW…SLFL, LDGL…LPFS, TILT…LCFY, VLIF…TSFL, LTLN…GFLM, LLMI…LFGI, LVLV…SAQI, LYLT…GGVW, and KDLF…LVII.

Belongs to the major facilitator superfamily.

The protein resides in the membrane. Involved in the transport of siderophore iron and so has a role in iron homeostasis. The chain is Siderophore iron transporter 2 (str2) from Schizosaccharomyces pombe (strain 972 / ATCC 24843) (Fission yeast).